Here is a 335-residue protein sequence, read N- to C-terminus: 2,4-dienoyl-CoA reductase [(3E)-enoyl-CoA-producing], mitochondrial (335 aa).

The N-terminal 34 residues, Met-1–Gln-34, are a transit peptide targeting the mitochondrion. 2 positions are modified to N6-acetyllysine; alternate: Lys-42 and Lys-49. An N6-succinyllysine; alternate mark is found at Lys-42 and Lys-49. Gly-66–Leu-71 lines the NADP(+) pocket. Thr-69 is subject to Phosphothreonine. Lys-73 is subject to N6-succinyllysine. Arg-91 provides a ligand contact to NADP(+). Arg-91 contributes to the substrate binding site. N6-acetyllysine; alternate is present on residues Lys-97 and Lys-106. Residues Lys-97 and Lys-106 each carry the N6-succinyllysine; alternate modification. Position 117 (Asp-117) interacts with NADP(+). Arg-119 and Phe-149 together coordinate substrate. The active-site Proton acceptor is Tyr-199. NADP(+) contacts are provided by residues Lys-214 and Pro-240–Ile-243. The residue at position 244 (Lys-244) is an N6-acetyllysine; alternate. Lys-244 is subject to N6-succinyllysine; alternate. Arg-251 lines the substrate pocket. Lys-260 carries the post-translational modification N6-acetyllysine; alternate. Lys-260 is modified (N6-succinyllysine; alternate). The residue at position 315 (Lys-315) is an N6-acetyllysine. Lys-319 carries the N6-acetyllysine; alternate modification. An N6-succinyllysine; alternate modification is found at Lys-319.

This sequence belongs to the short-chain dehydrogenases/reductases (SDR) family. 2,4-dienoyl-CoA reductase subfamily. Homotetramer.

Its subcellular location is the mitochondrion. It carries out the reaction a (2E,4E)-dienoyl-CoA + NADPH + H(+) = a 4,5-saturated-(3E)-enoyl-CoA + NADP(+). It catalyses the reaction a (2E,4Z)-dienoyl-CoA + NADPH + H(+) = a 4,5-saturated-(3E)-enoyl-CoA + NADP(+). The catalysed reaction is (2E,4E)-hexadienoyl-CoA + NADPH + H(+) = (3E)-hexenoyl-CoA + NADP(+). Its function is as follows. Auxiliary enzyme of beta-oxidation. It participates in the metabolism of unsaturated fatty enoyl-CoA esters having double bonds in both even- and odd-numbered positions in mitochondria. Catalyzes the NADP-dependent reduction of 2,4-dienoyl-CoA to yield trans-3-enoyl-CoA. The protein is 2,4-dienoyl-CoA reductase [(3E)-enoyl-CoA-producing], mitochondrial (Decr1) of Mus musculus (Mouse).